Reading from the N-terminus, the 264-residue chain is tRNA1(Val) (adenine(37)-N6)-methyltransferase (264 aa).

Belongs to the methyltransferase superfamily. tRNA (adenine-N(6)-)-methyltransferase family.

It is found in the cytoplasm. It catalyses the reaction adenosine(37) in tRNA1(Val) + S-adenosyl-L-methionine = N(6)-methyladenosine(37) in tRNA1(Val) + S-adenosyl-L-homocysteine + H(+). In terms of biological role, specifically methylates the adenine in position 37 of tRNA(1)(Val) (anticodon cmo5UAC). In Shewanella pealeana (strain ATCC 700345 / ANG-SQ1), this protein is tRNA1(Val) (adenine(37)-N6)-methyltransferase.